The chain runs to 827 residues: ADP-ribosylation factor GTPase-activating protein AGD3 (827 aa).

The BAR domain maps to 1–225 (MHFTKLDDSP…INQVLTYAQQ (225 aa)). Coiled coils occupy residues 116–139 (HEVK…REKF) and 223–253 (AQQS…RESR). A disordered region spans residues 246–269 (RQVDRESRWGSNGSNGSPNGDGIQ). The span at 255–267 (GSNGSNGSPNGDG) shows a compositional bias: low complexity. The PH domain occupies 292–430 (QTIRQGYLSK…WIEKITGVIA (139 aa)). A disordered region spans residues 439–467 (EQRLPGSPMGSGHHRSASESSSYESSEYD). The residue at position 445 (S445) is a Phosphoserine. Residues 501–643 (EKPIDALRKV…LFVRRSRDSD (143 aa)) enclose the Arf-GAP domain. A C4-type zinc finger spans residues 516-539 (CADCGAPEPDWASLNLGVLVCIEC). ANK repeat units follow at residues 728–757 (GGSS…NVNA), 761–790 (SGQT…DPEA), and 794–825 (EGKT…YNHR).

In terms of assembly, homodimer. Interacts with DRP1A. Interacts with VAB. In terms of tissue distribution, broadly expressed. Detected in developing veins of the leaf and root. Detected in roots, hypocotyls, cotyledons, leaves, siliques and shoot apical meristems.

It is found in the golgi apparatus. Its subcellular location is the trans-Golgi network. With respect to regulation, ARF GAP activity strongly enhanced by phosphatidylinositol 4-monophosphate (PIP) and moderately enhanced by phosphatidylinositol 4,5-bisphosphate (PIP2). Its function is as follows. GTPase-activating protein (GAP) for ADP ribosylation factor (ARF). Involved in the spatial control of provascular differentiation. Required for the formation of the normal pattern of continuous secondary veins. Involved in auxin signaling but not in polar auxin transport or in auxin responses. Required for PIN1 internalization in roots. This is ADP-ribosylation factor GTPase-activating protein AGD3 (AGD3) from Arabidopsis thaliana (Mouse-ear cress).